A 370-amino-acid chain; its full sequence is Binary larvicide subunit BinA (370 aa).

Residues 1-6 constitute a propeptide that is removed on maturation; that stretch reads MRNLDF. The segment at 1–155 is beta-trefoil domain; the sequence is MRNLDFIDSF…LISNKEQIYL (155 aa). Cys-31 and Cys-47 are disulfide-bonded. Positions 156–370 are pore-forming domain; the sequence is TLPSLPENEQ…NTKIITDDQN (215 aa).

This sequence belongs to the toxin_10 family. As to quaternary structure, forms a heterodimer with BinB. Post-translationally, processed by proteases in the mosquito gut, probably at both the N- and C-termini.

The protein resides in the spore. It localises to the perispore. In terms of biological role, component of a binary toxin active against Culex and some Aedes mosquito larvae; mortality towards both C.quinquefasciatus and A.atropalpus is maximal by 48 hours. A.aegypti is not very susceptible to this toxin. Binary toxin internalization into host gut cells requires both proteins. This is Binary larvicide subunit BinA (binA) from Lysinibacillus sphaericus (Bacillus sphaericus).